We begin with the raw amino-acid sequence, 158 residues long: 2-C-methyl-D-erythritol 2,4-cyclodiphosphate synthase (158 aa).

Residues D9 and H11 each contribute to the a divalent metal cation site. Residues 9–11 and 35–36 contribute to the 4-CDP-2-C-methyl-D-erythritol 2-phosphate site; these read DVH and HS. H43 is an a divalent metal cation binding site. 4-CDP-2-C-methyl-D-erythritol 2-phosphate-binding positions include 57-59 and R143; that span reads DIG.

This sequence belongs to the IspF family. As to quaternary structure, homotrimer. The cofactor is a divalent metal cation.

The enzyme catalyses 4-CDP-2-C-methyl-D-erythritol 2-phosphate = 2-C-methyl-D-erythritol 2,4-cyclic diphosphate + CMP. The protein operates within isoprenoid biosynthesis; isopentenyl diphosphate biosynthesis via DXP pathway; isopentenyl diphosphate from 1-deoxy-D-xylulose 5-phosphate: step 4/6. In terms of biological role, involved in the biosynthesis of isopentenyl diphosphate (IPP) and dimethylallyl diphosphate (DMAPP), two major building blocks of isoprenoid compounds. Catalyzes the conversion of 4-diphosphocytidyl-2-C-methyl-D-erythritol 2-phosphate (CDP-ME2P) to 2-C-methyl-D-erythritol 2,4-cyclodiphosphate (ME-CPP) with a corresponding release of cytidine 5-monophosphate (CMP). The polypeptide is 2-C-methyl-D-erythritol 2,4-cyclodiphosphate synthase (Chromobacterium violaceum (strain ATCC 12472 / DSM 30191 / JCM 1249 / CCUG 213 / NBRC 12614 / NCIMB 9131 / NCTC 9757 / MK)).